Reading from the N-terminus, the 193-residue chain is Xanthine phosphoribosyltransferase (193 aa).

Positions 20 and 27 each coordinate xanthine. A128–A132 is a 5-phospho-alpha-D-ribose 1-diphosphate binding site. K156 serves as a coordination point for xanthine.

The protein belongs to the purine/pyrimidine phosphoribosyltransferase family. Xpt subfamily. As to quaternary structure, homodimer.

The protein localises to the cytoplasm. It catalyses the reaction XMP + diphosphate = xanthine + 5-phospho-alpha-D-ribose 1-diphosphate. It functions in the pathway purine metabolism; XMP biosynthesis via salvage pathway; XMP from xanthine: step 1/1. In terms of biological role, converts the preformed base xanthine, a product of nucleic acid breakdown, to xanthosine 5'-monophosphate (XMP), so it can be reused for RNA or DNA synthesis. This is Xanthine phosphoribosyltransferase from Exiguobacterium sp. (strain ATCC BAA-1283 / AT1b).